The sequence spans 123 residues: Putative iron-sulfur cluster insertion protein ErpA (123 aa).

Residues C51, C115, and C117 each contribute to the iron-sulfur cluster site.

Belongs to the HesB/IscA family. In terms of assembly, homodimer. Iron-sulfur cluster is required as a cofactor.

Its function is as follows. Required for insertion of 4Fe-4S clusters. The chain is Putative iron-sulfur cluster insertion protein ErpA from Burkholderia lata (strain ATCC 17760 / DSM 23089 / LMG 22485 / NCIMB 9086 / R18194 / 383).